The primary structure comprises 124 residues: Large ribosomal subunit protein bL12 (124 aa).

Belongs to the bacterial ribosomal protein bL12 family. As to quaternary structure, homodimer. Part of the ribosomal stalk of the 50S ribosomal subunit. Forms a multimeric L10(L12)X complex, where L10 forms an elongated spine to which 2 to 4 L12 dimers bind in a sequential fashion. Binds GTP-bound translation factors.

Forms part of the ribosomal stalk which helps the ribosome interact with GTP-bound translation factors. Is thus essential for accurate translation. This is Large ribosomal subunit protein bL12 from Borreliella afzelii (strain PKo) (Borrelia afzelii).